Consider the following 295-residue polypeptide: Ankyrin repeat and SOCS box protein 17 (295 aa).

The stretch at S146–K176 is one ANK repeat. In terms of domain architecture, SOCS box spans L232 to I295.

The protein belongs to the ankyrin SOCS box (ASB) family. In terms of tissue distribution, specifically expressed in testis. Not detected in other tissues tested.

It functions in the pathway protein modification; protein ubiquitination. In terms of biological role, may be a substrate-recognition component of a SCF-like ECS (Elongin-Cullin-SOCS-box protein) E3 ubiquitin-protein ligase complex which mediates the ubiquitination and subsequent proteasomal degradation of target proteins. The protein is Ankyrin repeat and SOCS box protein 17 (ASB17) of Homo sapiens (Human).